A 1407-amino-acid chain; its full sequence is DNA-directed RNA polymerase subunit beta' (1407 aa).

Residues cysteine 70, cysteine 72, cysteine 85, and cysteine 88 each contribute to the Zn(2+) site. Mg(2+) is bound by residues aspartate 460, aspartate 462, and aspartate 464. Zn(2+)-binding residues include cysteine 814, cysteine 888, cysteine 895, and cysteine 898.

Belongs to the RNA polymerase beta' chain family. As to quaternary structure, the RNAP catalytic core consists of 2 alpha, 1 beta, 1 beta' and 1 omega subunit. When a sigma factor is associated with the core the holoenzyme is formed, which can initiate transcription. The cofactor is Mg(2+). Zn(2+) is required as a cofactor.

It catalyses the reaction RNA(n) + a ribonucleoside 5'-triphosphate = RNA(n+1) + diphosphate. In terms of biological role, DNA-dependent RNA polymerase catalyzes the transcription of DNA into RNA using the four ribonucleoside triphosphates as substrates. This is DNA-directed RNA polymerase subunit beta' from Pectobacterium atrosepticum (strain SCRI 1043 / ATCC BAA-672) (Erwinia carotovora subsp. atroseptica).